The chain runs to 105 residues: Photosystem II 5 kDa protein, chloroplastic (105 aa).

The transit peptide at 1 to 77 (MASITMTTSF…ICSVAGVATA (77 aa)) directs the protein to the chloroplast.

The maturation of the PSII-T precursor to its final form occurs through a two step process. First, a stromal intermediate is formed, which, upon translocation into the thylakoid membrane, is processed to the mature protein.

It localises to the plastid. Its subcellular location is the chloroplast thylakoid membrane. May be a component of the oxygen-evolving complex. This Gossypium hirsutum (Upland cotton) protein is Photosystem II 5 kDa protein, chloroplastic (PSBT).